The chain runs to 21 residues: Neuropeptide gamma (21 aa).

The disordered stretch occupies residues 1–21 (SSANPQITRKRHKINSFVGLM). Methionine amide is present on M21.

Belongs to the tachykinin family.

The protein localises to the secreted. Tachykinins are active peptides which excite neurons, evoke behavioral responses, and contract (directly or indirectly) many smooth muscles. Is a potent vasoconstrictor and secretagogue that plays a regulatory role in the central control of ventilation, in particular, the heart rate variability (HRV). The polypeptide is Neuropeptide gamma (Oncorhynchus mykiss (Rainbow trout)).